Reading from the N-terminus, the 22-residue chain is Protein YncP (22 aa).

The polypeptide is Protein YncP (Escherichia coli (strain K12)).